Reading from the N-terminus, the 291-residue chain is Sulfotransferase 1A1 (291 aa).

Lys-44–Trp-49 contacts 3'-phosphoadenylyl sulfate. Lys-102–His-104 is a binding site for substrate. Residue His-104 is the Proton acceptor of the active site. 3'-phosphoadenylyl sulfate is bound by residues Arg-126, Ser-134, Tyr-189, Thr-223 to Met-228, and Phe-251 to Gly-255. The residue at position 134 (Ser-134) is a Phosphoserine.

Belongs to the sulfotransferase 1 family. As to quaternary structure, homodimer. As to expression, expressed in brain, colon, liver, and small intestine of mice colonized with B.ovatus and L.plantarum.

The protein resides in the cytoplasm. It carries out the reaction a phenol + 3'-phosphoadenylyl sulfate = an aryl sulfate + adenosine 3',5'-bisphosphate + H(+). It catalyses the reaction 17beta-estradiol + 3'-phosphoadenylyl sulfate = 17beta-estradiol 3-sulfate + adenosine 3',5'-bisphosphate + H(+). The enzyme catalyses 4-ethylphenol + 3'-phosphoadenylyl sulfate = 4-ethylphenyl sulfate + adenosine 3',5'-bisphosphate + H(+). The catalysed reaction is 4-nitrophenol + 3'-phosphoadenylyl sulfate = 4-nitrophenyl sulfate + adenosine 3',5'-bisphosphate. It carries out the reaction dopamine + 3'-phosphoadenylyl sulfate = dopamine 3-O-sulfate + adenosine 3',5'-bisphosphate + H(+). It catalyses the reaction dopamine + 3'-phosphoadenylyl sulfate = dopamine 4-O-sulfate + adenosine 3',5'-bisphosphate + H(+). The enzyme catalyses 3,3',5-triiodo-L-thyronine + 3'-phosphoadenylyl sulfate = 3,3',5-triiodo-L-thyronine sulfate + adenosine 3',5'-bisphosphate + H(+). The catalysed reaction is 3,3',5'-triiodo-L-thyronine + 3'-phosphoadenylyl sulfate = 3,3',5'-triiodo-L-thyronine sulfate + adenosine 3',5'-bisphosphate + H(+). It carries out the reaction 3,3'-diiodo-L-thyronine + 3'-phosphoadenylyl sulfate = 3,3'-diiodo-L-thyronine sulfate + adenosine 3',5'-bisphosphate + H(+). It catalyses the reaction L-thyroxine + 3'-phosphoadenylyl sulfate = L-thyroxine sulfate + adenosine 3',5'-bisphosphate + H(+). Sulfotransferase that utilizes 3'-phospho-5'-adenylyl sulfate (PAPS) as sulfonate donor to catalyze the sulfate conjugation of a wide variety of acceptor molecules bearing a hydroxyl or an amine group. Sulfonation increases the water solubility of most compounds, and therefore their renal excretion, but it can also result in bioactivation to form active metabolites. Displays broad substrate specificity for small phenolic compounds. Plays an important role in the sulfonation of endogenous molecules such as steroid hormones. Mediates also the metabolic activation of carcinogenic N-hydroxyarylamines leading to highly reactive intermediates capable of forming DNA adducts, potentially resulting in mutagenesis. May play a role in gut microbiota-host metabolic interaction. O-sulfonates 4-ethylphenol (4-EP), a dietary tyrosine-derived metabolite produced by gut bacteria. The product 4-EPS crosses the blood-brain barrier and may negatively regulate oligodendrocyte maturation and myelination, affecting the functional connectivity of different brain regions associated with the limbic system. Catalyzes the sulfate conjugation of dopamine. Catalyzes the sulfation of T4 (L-thyroxine/3,5,3',5'-tetraiodothyronine), T3 (3,5,3'-triiodothyronine), rT3 (3,3',5'-triiodothyronine) and 3,3'-T2 (3,3'-diiodothyronine), with a substrate preference of 3,3'-T2 &gt; rT3 &gt; T3 &gt; T4. This Mus musculus (Mouse) protein is Sulfotransferase 1A1 (Sult1a1).